Reading from the N-terminus, the 91-residue chain is Large ribosomal subunit protein uL23 (91 aa).

The protein belongs to the universal ribosomal protein uL23 family. In terms of assembly, part of the 50S ribosomal subunit. Contacts protein L29, and trigger factor when it is bound to the ribosome.

In terms of biological role, one of the early assembly proteins it binds 23S rRNA. One of the proteins that surrounds the polypeptide exit tunnel on the outside of the ribosome. Forms the main docking site for trigger factor binding to the ribosome. The polypeptide is Large ribosomal subunit protein uL23 (Macrococcus caseolyticus (strain JCSC5402) (Macrococcoides caseolyticum)).